A 68-amino-acid polypeptide reads, in one-letter code: Small ribosomal subunit protein bS21 (68 aa).

Belongs to the bacterial ribosomal protein bS21 family.

The polypeptide is Small ribosomal subunit protein bS21 (Ruegeria sp. (strain TM1040) (Silicibacter sp.)).